The primary structure comprises 648 residues: Acetyl-coenzyme A synthetase (648 aa).

Residues 191-194, threonine 310, and asparagine 334 contribute to the CoA site; that span reads RGGR. ATP is bound by residues 386 to 388, 410 to 415, aspartate 499, and arginine 514; these read GEP and DTWWQT. Serine 522 is a CoA binding site. Arginine 525 is an ATP binding site. Mg(2+) is bound by residues valine 536, histidine 538, and isoleucine 541. Arginine 583 lines the CoA pocket. Position 608 is an N6-acetyllysine (lysine 608).

This sequence belongs to the ATP-dependent AMP-binding enzyme family. Requires Mg(2+) as cofactor. Acetylated. Deacetylation by the SIR2-homolog deacetylase activates the enzyme.

The enzyme catalyses acetate + ATP + CoA = acetyl-CoA + AMP + diphosphate. Catalyzes the conversion of acetate into acetyl-CoA (AcCoA), an essential intermediate at the junction of anabolic and catabolic pathways. AcsA undergoes a two-step reaction. In the first half reaction, AcsA combines acetate with ATP to form acetyl-adenylate (AcAMP) intermediate. In the second half reaction, it can then transfer the acetyl group from AcAMP to the sulfhydryl group of CoA, forming the product AcCoA. The protein is Acetyl-coenzyme A synthetase of Aeromonas salmonicida (strain A449).